The primary structure comprises 271 residues: Thiamine thiazole synthase (271 aa).

Residues S39, 58–59, G66, V130, and 158–160 each bind NAD(+); these read ER and HVD. Residues D160 and H175 each contribute to the Fe cation site. M225 contacts NAD(+). R235 lines the glycine pocket.

It belongs to the THI4 family. As to quaternary structure, homooctamer; tetramer of dimers. Requires Fe(2+) as cofactor.

It carries out the reaction hydrogen sulfide + glycine + NAD(+) = ADP-5-ethyl-4-methylthiazole-2-carboxylate + nicotinamide + 3 H2O + H(+). It participates in cofactor biosynthesis; thiamine diphosphate biosynthesis. Functionally, involved in the biosynthesis of the thiazole moiety of thiamine. Catalyzes the conversion of NAD and glycine to adenosine diphosphate 5-(2-hydroxyethyl)-4-methylthiazole-2-carboxylate (ADT), an adenylated thiazole intermediate, using free sulfide as a source of sulfur. The sequence is that of Thiamine thiazole synthase from Metallosphaera sedula (strain ATCC 51363 / DSM 5348 / JCM 9185 / NBRC 15509 / TH2).